The primary structure comprises 419 residues: Putative competence-damage inducible protein (419 aa).

It belongs to the CinA family.

This chain is Putative competence-damage inducible protein, found in Lysinibacillus sphaericus (strain C3-41).